The chain runs to 236 residues: Hydroxyacylglutathione hydrolase (236 aa).

Zn(2+) is bound by residues His-52, His-54, Asp-56, His-57, His-108, Asp-125, and His-163.

It belongs to the metallo-beta-lactamase superfamily. Glyoxalase II family. As to quaternary structure, monomer. Zn(2+) serves as cofactor.

It carries out the reaction an S-(2-hydroxyacyl)glutathione + H2O = a 2-hydroxy carboxylate + glutathione + H(+). It functions in the pathway secondary metabolite metabolism; methylglyoxal degradation; (R)-lactate from methylglyoxal: step 2/2. Functionally, thiolesterase that catalyzes the hydrolysis of S-D-lactoyl-glutathione to form glutathione and D-lactic acid. This Mannheimia succiniciproducens (strain KCTC 0769BP / MBEL55E) protein is Hydroxyacylglutathione hydrolase.